The chain runs to 242 residues: Pyridoxine 5'-phosphate synthase (242 aa).

Position 6 (Asn6) interacts with 3-amino-2-oxopropyl phosphate. 8 to 9 (DH) contributes to the 1-deoxy-D-xylulose 5-phosphate binding site. Arg17 is a 3-amino-2-oxopropyl phosphate binding site. The Proton acceptor role is filled by His42. Residues Arg44 and His49 each contribute to the 1-deoxy-D-xylulose 5-phosphate site. The active-site Proton acceptor is Glu69. Thr99 is a binding site for 1-deoxy-D-xylulose 5-phosphate. Residue His190 is the Proton donor of the active site. 3-amino-2-oxopropyl phosphate contacts are provided by residues Gly191 and 212-213 (GH).

Belongs to the PNP synthase family. Homooctamer; tetramer of dimers.

It localises to the cytoplasm. The catalysed reaction is 3-amino-2-oxopropyl phosphate + 1-deoxy-D-xylulose 5-phosphate = pyridoxine 5'-phosphate + phosphate + 2 H2O + H(+). The protein operates within cofactor biosynthesis; pyridoxine 5'-phosphate biosynthesis; pyridoxine 5'-phosphate from D-erythrose 4-phosphate: step 5/5. In terms of biological role, catalyzes the complicated ring closure reaction between the two acyclic compounds 1-deoxy-D-xylulose-5-phosphate (DXP) and 3-amino-2-oxopropyl phosphate (1-amino-acetone-3-phosphate or AAP) to form pyridoxine 5'-phosphate (PNP) and inorganic phosphate. This is Pyridoxine 5'-phosphate synthase from Neisseria meningitidis serogroup A / serotype 4A (strain DSM 15465 / Z2491).